Here is a 274-residue protein sequence, read N- to C-terminus: Thymidylate synthase (274 aa).

R21 is a dUMP binding site. Position 51 (H51) interacts with (6R)-5,10-methylene-5,6,7,8-tetrahydrofolate. 123 to 124 (RR) lines the dUMP pocket. C156 acts as the Nucleophile in catalysis. Residues 176–179 (RSAD), N187, and 217–219 (HIY) contribute to the dUMP site. D179 provides a ligand contact to (6R)-5,10-methylene-5,6,7,8-tetrahydrofolate. S273 contributes to the (6R)-5,10-methylene-5,6,7,8-tetrahydrofolate binding site.

The protein belongs to the thymidylate synthase family. Bacterial-type ThyA subfamily. In terms of assembly, homodimer.

It localises to the cytoplasm. The catalysed reaction is dUMP + (6R)-5,10-methylene-5,6,7,8-tetrahydrofolate = 7,8-dihydrofolate + dTMP. Its pathway is pyrimidine metabolism; dTTP biosynthesis. Catalyzes the reductive methylation of 2'-deoxyuridine-5'-monophosphate (dUMP) to 2'-deoxythymidine-5'-monophosphate (dTMP) while utilizing 5,10-methylenetetrahydrofolate (mTHF) as the methyl donor and reductant in the reaction, yielding dihydrofolate (DHF) as a by-product. This enzymatic reaction provides an intracellular de novo source of dTMP, an essential precursor for DNA biosynthesis. The chain is Thymidylate synthase from Francisella tularensis subsp. novicida (strain U112).